The primary structure comprises 239 residues: Sugar fermentation stimulation protein homolog (239 aa).

This sequence belongs to the SfsA family.

The sequence is that of Sugar fermentation stimulation protein homolog from Desulforamulus reducens (strain ATCC BAA-1160 / DSM 100696 / MI-1) (Desulfotomaculum reducens).